Here is a 790-residue protein sequence, read N- to C-terminus: Nuclear cap-binding protein subunit 1 (790 aa).

Residues 1 to 26 form a disordered region; sequence MSRRRHSYENDGGQPHKRRKTSDANE. The short motif at 3-20 is the Nuclear localization signal element; the sequence is RRRHSYENDGGQPHKRRK. Residue serine 7 is modified to Phosphoserine. At threonine 21 the chain carries Phosphothreonine. A phosphoserine mark is found at serine 22 and serine 201. The region spanning 28–240 is the MIF4G domain; it reads EDHLESLICK…CLWAQIQKLK (213 aa). Lysine 204 carries the post-translational modification N6-acetyllysine. A coiled-coil region spans residues 643–713; that stretch reads STIRKMNKHV…SEQKNLFLVI (71 aa). The interval 666-685 is disordered; the sequence is LARQHKRRSDDDDRSSDRKD. Lysine 684 participates in a covalent cross-link: Glycyl lysine isopeptide (Lys-Gly) (interchain with G-Cter in SUMO2). An N6-acetyllysine modification is found at lysine 698.

This sequence belongs to the NCBP1 family. As to quaternary structure, component of the nuclear cap-binding complex (CBC), a heterodimer composed of NCBP1/CBP80 and NCBP2/CBP20 that interacts with m7GpppG-capped RNA. Found in a U snRNA export complex containing PHAX/RNUXA, NCBP1/CBP80, NCBP2/CBP20, RAN, XPO1 and m7G-capped RNA. Identified in a IGF2BP1-dependent mRNP granule complex containing untranslated mRNAs. Interacts with PHAX/RNUXA, SRRT/ARS2, EIF4G2, IGF2BP1, HNRNPF, HNRNPH1, KIAA0427/CTIF, PARN, DROSHA, UPF1 and ALYREF/THOC4. May interact with EIF4G1; the interaction is however controversial. The large PER complex involved in the repression of transcriptional termination is composed of at least PER2, CDK9, DDX5, DHX9, NCBP1/CBP80 and POLR2A (active). Component of an alternative nuclear cap-binding complex (CBC) composed of NCBP1/CBP80 and NCBP3. Interacts with METTL3. Interacts with ZFC3H1 in a RNase-insensitive manner. Interacts with MTREX. Interacts with TASOR. Interacts with DHX34; the interaction is RNA-dependent. Interacts with KPNA3. Dephosphorylated at Thr-21 by the PNUTS-PP1 complex during RNA polymerase II transcription pause-release. In terms of tissue distribution, expressed in the spermatogonia, spermatocytes and granular cells within the cerebellum.

Its subcellular location is the nucleus. The protein resides in the cytoplasm. Component of the cap-binding complex (CBC), which binds cotranscriptionally to the 5'-cap of pre-mRNAs and is involved in various processes such as pre-mRNA splicing, translation regulation, nonsense-mediated mRNA decay, RNA-mediated gene silencing (RNAi) by microRNAs (miRNAs) and mRNA export. The CBC complex is involved in mRNA export from the nucleus via its interaction with ALYREF/THOC4/ALY, leading to the recruitment of the mRNA export machinery to the 5'-end of mRNA and to mRNA export in a 5' to 3' direction through the nuclear pore. The CBC complex is also involved in mediating U snRNA and intronless mRNAs export from the nucleus. The CBC complex is essential for a pioneer round of mRNA translation, before steady state translation when the CBC complex is replaced by cytoplasmic cap-binding protein eIF4E. The pioneer round of mRNA translation mediated by the CBC complex plays a central role in nonsense-mediated mRNA decay (NMD), NMD only taking place in mRNAs bound to the CBC complex, but not on eIF4E-bound mRNAs. The CBC complex enhances NMD in mRNAs containing at least one exon-junction complex (EJC) via its interaction with UPF1, promoting the interaction between UPF1 and UPF2. The CBC complex is also involved in 'failsafe' NMD, which is independent of the EJC complex, while it does not participate in Staufen-mediated mRNA decay (SMD). During cell proliferation, the CBC complex is also involved in microRNAs (miRNAs) biogenesis via its interaction with SRRT/ARS2 and is required for miRNA-mediated RNA interference. The CBC complex also acts as a negative regulator of PARN, thereby acting as an inhibitor of mRNA deadenylation. In the CBC complex, NCBP1/CBP80 does not bind directly capped RNAs (m7GpppG-capped RNA) but is required to stabilize the movement of the N-terminal loop of NCBP2/CBP20 and lock the CBC into a high affinity cap-binding state with the cap structure. Associates with NCBP3 to form an alternative cap-binding complex (CBC) which plays a key role in mRNA export and is particularly important in cellular stress situations such as virus infections. The conventional CBC with NCBP2 binds both small nuclear RNA (snRNA) and messenger (mRNA) and is involved in their export from the nucleus whereas the alternative CBC with NCBP3 does not bind snRNA and associates only with mRNA thereby playing a role only in mRNA export. NCBP1/CBP80 is required for cell growth and viability. The polypeptide is Nuclear cap-binding protein subunit 1 (Ncbp1) (Mus musculus (Mouse)).